The primary structure comprises 386 residues: MPAPMDSLAAFATDKLAALESQSLRRRLRPTRRTDGVCVERGGRRLVSFSCNDYLGLSHHPAVKAAAAAAIESEGLGAGASRLVTGDNPLLATLERRLAALKGAEAACVFGSGYLANLGIIPTFMGAGDIVLVDELAHACIWGGARLSGAQVISFRHNDVDDLTGKLAAARGSARRALVATDGVFSMDGDIAPLDDISRTAQAWDAWLLVDDAHGLGVVGGGVGVGALFPSARIDLSMGTLSKALGAYGAYVCAAQPVIDLIKSRTRTVVYTTALPPAVAAGALAALDIIITEPKRVAAPRLRARRLTRSLGLPTAESAIVPIVLGDAETALAAAADLERQGLLAVAIRPPTVPANTARLRIACSALHTESQIDDLAAALQPWMQA.

Arg26 is a substrate binding site. A pyridoxal 5'-phosphate-binding site is contributed by 113–114 (GY). His138 is a binding site for substrate. Pyridoxal 5'-phosphate is bound by residues Ser186, 211–214 (DDAH), and 240–243 (TLSK). Residue Lys243 is modified to N6-(pyridoxal phosphate)lysine. Thr352 is a binding site for substrate.

The protein belongs to the class-II pyridoxal-phosphate-dependent aminotransferase family. BioF subfamily. In terms of assembly, homodimer. Requires pyridoxal 5'-phosphate as cofactor.

The enzyme catalyses 6-carboxyhexanoyl-[ACP] + L-alanine + H(+) = (8S)-8-amino-7-oxononanoate + holo-[ACP] + CO2. It participates in cofactor biosynthesis; biotin biosynthesis. Catalyzes the decarboxylative condensation of pimeloyl-[acyl-carrier protein] and L-alanine to produce 8-amino-7-oxononanoate (AON), [acyl-carrier protein], and carbon dioxide. This Phenylobacterium zucineum (strain HLK1) protein is Putative 8-amino-7-oxononanoate synthase (bioF).